The sequence spans 475 residues: ISWI one complex protein 4 (475 aa).

Ser-2 carries the phosphoserine modification. A Phosphothreonine modification is found at Thr-9. Disordered stretches follow at residues 42 to 84 (VSVH…DFGE), 181 to 296 (EEEY…IKYH), and 454 to 475 (EMDR…KVGA). A phosphoserine mark is found at Ser-65 and Ser-73. Acidic residues-rich tracts occupy residues 72-84 (QSEE…DFGE), 181-193 (EEEY…EENE), and 241-252 (ASEEEEEEEEEK). At Ser-242 the chain carries Phosphoserine. The segment covering 259 to 294 (KRPQRTKTKKVVVSKTKPNPKTKAKKEKPKPPKPIK) has biased composition (basic residues). Basic and acidic residues predominate over residues 456-475 (DREKPSFSEDVKEEESKVGA).

Component of the ISW1B complex, which at least consists of ISW1, IOC2 and IOC4.

The protein resides in the nucleus. Its function is as follows. Functions as a component of the ISW1B complex, which acts in remodeling the chromatin by catalyzing an ATP-dependent alteration in the structure of nucleosomal DNA. The ISW1B complex acts within coding regions to control the amount of RNA polymerase II released into productive elongation and to coordinate elongation with termination and pre-mRNA processing. This Saccharomyces cerevisiae (strain ATCC 204508 / S288c) (Baker's yeast) protein is ISWI one complex protein 4 (IOC4).